The chain runs to 776 residues: Homoaconitase, mitochondrial (776 aa).

Residues 1 to 38 (MQSRLVSQSGLGRRWAVLRCALSKTYQRRTLTSTRRQF) constitute a mitochondrion transit peptide. [4Fe-4S] cluster-binding residues include Cys-394, Cys-463, and Cys-466.

Belongs to the aconitase/IPM isomerase family. [4Fe-4S] cluster is required as a cofactor.

The protein resides in the mitochondrion. The enzyme catalyses (2R,3S)-homoisocitrate = cis-homoaconitate + H2O. The protein operates within amino-acid biosynthesis; L-lysine biosynthesis via AAA pathway; L-alpha-aminoadipate from 2-oxoglutarate: step 3/5. Functionally, catalyzes the reversible hydration of cis-homoaconitate to (2R,3S)-homoisocitrate, a step in the alpha-aminoadipate pathway for lysine biosynthesis. In Emericella nidulans (strain FGSC A4 / ATCC 38163 / CBS 112.46 / NRRL 194 / M139) (Aspergillus nidulans), this protein is Homoaconitase, mitochondrial (lys4).